A 177-amino-acid chain; its full sequence is Large ribosomal subunit protein uL6 (177 aa).

It belongs to the universal ribosomal protein uL6 family. As to quaternary structure, part of the 50S ribosomal subunit.

Its function is as follows. This protein binds to the 23S rRNA, and is important in its secondary structure. It is located near the subunit interface in the base of the L7/L12 stalk, and near the tRNA binding site of the peptidyltransferase center. The chain is Large ribosomal subunit protein uL6 from Zymomonas mobilis subsp. mobilis (strain ATCC 31821 / ZM4 / CP4).